The chain runs to 293 residues: 4-hydroxy-tetrahydrodipicolinate synthase (293 aa).

Residue T45 participates in pyruvate binding. The active-site Proton donor/acceptor is Y133. Residue K161 is the Schiff-base intermediate with substrate of the active site. V203 is a pyruvate binding site.

This sequence belongs to the DapA family. As to quaternary structure, homotetramer; dimer of dimers.

It is found in the cytoplasm. The enzyme catalyses L-aspartate 4-semialdehyde + pyruvate = (2S,4S)-4-hydroxy-2,3,4,5-tetrahydrodipicolinate + H2O + H(+). It functions in the pathway amino-acid biosynthesis; L-lysine biosynthesis via DAP pathway; (S)-tetrahydrodipicolinate from L-aspartate: step 3/4. Functionally, catalyzes the condensation of (S)-aspartate-beta-semialdehyde [(S)-ASA] and pyruvate to 4-hydroxy-tetrahydrodipicolinate (HTPA). The chain is 4-hydroxy-tetrahydrodipicolinate synthase from Exiguobacterium sp. (strain ATCC BAA-1283 / AT1b).